The sequence spans 158 residues: uncharacterized protein (158 aa).

The next 2 helical transmembrane spans lie at 10–30 (LFFIFSGGLVFFFFEFFLNHF) and 40–60 (YITFYFIKNHPSLFLLFNFFL).

It is found in the membrane. This is an uncharacterized protein from Schizosaccharomyces pombe (strain 972 / ATCC 24843) (Fission yeast).